We begin with the raw amino-acid sequence, 61 residues long: Aerolysin regulatory protein (61 aa).

Residues 1-14 (MMIKRHLPQPRHRE) show a composition bias toward basic residues. The disordered stretch occupies residues 1 to 61 (MMIKRHLPQP…GQTHTGPQIR (61 aa)). Polar residues predominate over residues 51 to 61 (DGQTHTGPQIR).

In terms of biological role, regulation of the expression of aerolysin. This Aeromonas sobria protein is Aerolysin regulatory protein (aerC).